Here is a 574-residue protein sequence, read N- to C-terminus: uncharacterized protein (574 aa).

The next 11 membrane-spanning stretches (helical) occupy residues 14–34 (FFPT…LFFG), 54–74 (VVPL…LGIV), 124–144 (WLMA…SDTA), 205–225 (ICKC…TGTI), 253–273 (SWMA…WFIV), 323–343 (LVIF…VIPG), 350–370 (KGYV…FIWP), 403–423 (FPWS…AVRV), 441–461 (MPFF…TEFS), 485–505 (PLYF…LPMA), and 520–540 (MIDM…ITAI). Asparagine 565 and asparagine 569 each carry an N-linked (GlcNAc...) asparagine glycan.

Belongs to the SLC13A/DASS transporter (TC 2.A.47) family. NADC subfamily.

It localises to the membrane. This is an uncharacterized protein from Caenorhabditis elegans.